Here is a 287-residue protein sequence, read N- to C-terminus: Large ribosomal subunit protein uL2 (287 aa).

The tract at residues 221–287 (RGSVMNPCDH…SKRSRGGRDS (67 aa)) is disordered. A compositionally biased stretch (basic residues) spans 258-287 (KTRKRNKPSNRFVLRKRRRTSKRSRGGRDS).

The protein belongs to the universal ribosomal protein uL2 family. In terms of assembly, part of the 50S ribosomal subunit. Forms a bridge to the 30S subunit in the 70S ribosome.

In terms of biological role, one of the primary rRNA binding proteins. Required for association of the 30S and 50S subunits to form the 70S ribosome, for tRNA binding and peptide bond formation. It has been suggested to have peptidyltransferase activity; this is somewhat controversial. Makes several contacts with the 16S rRNA in the 70S ribosome. The polypeptide is Large ribosomal subunit protein uL2 (Prochlorococcus marinus (strain MIT 9313)).